Here is a 470-residue protein sequence, read N- to C-terminus: MTRYQHLATLLAERIEQGLYRHGEKLPSVRSLSQEHGVSISTVQQAYQTLETMKLITPQPRSGYFVAQRKAQPPVPPMTRPVQRPVEITQWDQVLDMLEAHSDSSIVPLSKSTPDVEAPSLKPLWRELSRVVQHNLQTVLGYDLLAGQRVLREQIARLMLDSGSVVTADDIIITSGCHNSMSLALMAVCKPGDIVAVESPCYYGSMQMLRGMGVKVIEIPTDPETGISVEALELALEQWPIKGIILVPNCNNPLGFIMPDARKRAVLSLAQRHDIVIFEDDVYGELATEYPRPRTIHSWDIDGRVLLCSSFSKSIAPGLRVGWVAPGRYHDKLMHMKYAISSFNVPSTQMAAATFVLEGHYHRHIRRMRQIYQRNLALYTCWIREYFPCEICITRPKGGFLLWIELPEQVDMVCVARQLCRMKIQVAAGSIFSASGKYRNCLRINCALPLSETYREALKQIGEAVYRAME.

Residues 1–69 form the HTH gntR-type domain; sequence MTRYQHLATL…PRSGYFVAQR (69 aa). An N6-(pyridoxal phosphate)lysine modification is found at Lys-313.

It in the C-terminal section; belongs to the class-I pyridoxal-phosphate-dependent aminotransferase family.

This is an uncharacterized protein from Escherichia coli (strain K12).